Here is a 78-residue protein sequence, read N- to C-terminus: Acyl carrier protein (78 aa).

Residues 2-77 (SDIADRVKKI…DAIKFLEKNS (76 aa)) form the Carrier domain. Serine 37 is modified (O-(pantetheine 4'-phosphoryl)serine).

This sequence belongs to the acyl carrier protein (ACP) family. 4'-phosphopantetheine is transferred from CoA to a specific serine of apo-ACP by AcpS. This modification is essential for activity because fatty acids are bound in thioester linkage to the sulfhydryl of the prosthetic group.

The protein resides in the cytoplasm. It functions in the pathway lipid metabolism; fatty acid biosynthesis. Its function is as follows. Carrier of the growing fatty acid chain in fatty acid biosynthesis. The protein is Acyl carrier protein of Methylobacterium sp. (strain 4-46).